Here is an 847-residue protein sequence, read N- to C-terminus: Envelope glycoprotein gp160 (847 aa).

Positions 1–31 are cleaved as a signal peptide; sequence MRVKGIRKNYQHLWRGGTLLLGMLMICSAVE. Residues 32–675 are Extracellular-facing; it reads KLWVTVYYGV…ISKWLWYIKI (644 aa). Cysteine 53 and cysteine 73 are joined by a disulfide. N-linked (GlcNAc...) asparagine; by host glycosylation is found at asparagine 87, asparagine 135, asparagine 154, asparagine 186, asparagine 195, asparagine 232, asparagine 239, asparagine 260, asparagine 274, asparagine 293, asparagine 299, asparagine 329, asparagine 336, and asparagine 352. Intrachain disulfides connect cysteine 118–cysteine 203, cysteine 125–cysteine 194, cysteine 130–cysteine 155, cysteine 216–cysteine 245, and cysteine 226–cysteine 237. Residues 130–154 are V1; the sequence is CTNLKNATNTKSSNWKEMDRGEIKN. The segment at 155–194 is V2; that stretch reads CSFKVTTSIRNKMQKEYALFYKLDVVPIDNDNTSYKLINC. The V3 stretch occupies residues 294–327; the sequence is CTRPNNNTRKSITIGPGRAFYATGDIIGDIRQAH. An intrachain disulfide couples cysteine 294 to cysteine 328. The interval 360–370 is CD4-binding loop; sequence SSGGDPEIVMH. 2 disulfide bridges follow: cysteine 374/cysteine 435 and cysteine 381/cysteine 408. The interval 381 to 408 is V4; that stretch reads CNSTQLFNSTWNNTIGPNNTNGTITLPC. Residues asparagine 382, asparagine 388, asparagine 392, asparagine 398, asparagine 401, asparagine 438, and asparagine 454 are each glycosylated (N-linked (GlcNAc...) asparagine; by host). V5 stretches follow at residues 451 to 462 and 453 to 462; these read EISNTTEIFRPG and SNTTEIFRPG. A fusion peptide region spans residues 503–523; the sequence is AVTLGAMFLGFLGAAGSTMGA. The immunosuppression stretch occupies residues 565–583; that stretch reads KQLQARVLAVERYLKDQQL. Cysteine 589 and cysteine 595 are joined by a disulfide. Residues asparagine 602, asparagine 607, asparagine 616, and asparagine 628 are each glycosylated (N-linked (GlcNAc...) asparagine; by host). Residues 624 to 658 adopt a coiled-coil conformation; sequence REIDNYTNLIYTLIEESQNQQEKNEQELLELDKWA. Residues 653 to 674 are MPER; binding to GalCer; sequence ELDKWASLWNWFDISKWLWYIK. The helical transmembrane segment at 676–696 threads the bilayer; the sequence is FIMIVGGLVGLRIVFTVLSIV. Over 697–847 the chain is Cytoplasmic; it reads NRVRQGYSPL…IRQGFERALL (151 aa). Positions 703–706 match the YXXL motif; contains endocytosis signal motif; that stretch reads YSPL. The interval 710 to 736 is disordered; the sequence is TRFPAPRGPDRPEGIEEEGGERDRDRS. Residue cysteine 755 is the site of S-palmitoyl cysteine; by host attachment. The Di-leucine internalization motif motif lies at 846-847; that stretch reads LL.

Belongs to the HIV-1 env protein family. In terms of assembly, the mature envelope protein (Env) consists of a homotrimer of non-covalently associated gp120-gp41 heterodimers. The resulting complex protrudes from the virus surface as a spike. There seems to be as few as 10 spikes on the average virion. Interacts with host CD4, CCR5 and CXCR4. Gp120 also interacts with the C-type lectins CD209/DC-SIGN and CLEC4M/DC-SIGNR (collectively referred to as DC-SIGN(R)). Gp120 and gp41 interact with GalCer. Gp120 interacts with host ITGA4/ITGB7 complex; on CD4+ T-cells, this interaction results in rapid activation of integrin ITGAL/LFA-1, which facilitates efficient cell-to-cell spreading of HIV-1. Gp120 interacts with cell-associated heparan sulfate; this interaction increases virus infectivity on permissive cells and may be involved in infection of CD4- cells. The mature envelope protein (Env) consists of a homotrimer of non-covalently associated gp120-gp41 heterodimers. The resulting complex protrudes from the virus surface as a spike. There seems to be as few as 10 spikes on the average virion. Highly glycosylated by host. The high number of glycan on the protein is reffered to as 'glycan shield' because it contributes to hide protein sequence from adaptive immune system. Post-translationally, palmitoylation of the transmembrane protein and of Env polyprotein (prior to its proteolytic cleavage) is essential for their association with host cell membrane lipid rafts. Palmitoylation is therefore required for envelope trafficking to classical lipid rafts, but not for viral replication. In terms of processing, specific enzymatic cleavages in vivo yield mature proteins. Envelope glycoproteins are synthesized as an inactive precursor that is heavily N-glycosylated and processed likely by host cell furin in the Golgi to yield the mature SU and TM proteins. The cleavage site between SU and TM requires the minimal sequence [KR]-X-[KR]-R. About 2 of the 9 disulfide bonds of gp41 are reduced by P4HB/PDI, following binding to CD4 receptor.

Its subcellular location is the virion membrane. It is found in the host cell membrane. It localises to the host endosome membrane. In terms of biological role, oligomerizes in the host endoplasmic reticulum into predominantly trimers. In a second time, gp160 transits in the host Golgi, where glycosylation is completed. The precursor is then proteolytically cleaved in the trans-Golgi and thereby activated by cellular furin or furin-like proteases to produce gp120 and gp41. Attaches the virus to the host lymphoid cell by binding to the primary receptor CD4. This interaction induces a structural rearrangement creating a high affinity binding site for a chemokine coreceptor like CXCR4 and/or CCR5. Acts as a ligand for CD209/DC-SIGN and CLEC4M/DC-SIGNR, which are respectively found on dendritic cells (DCs), and on endothelial cells of liver sinusoids and lymph node sinuses. These interactions allow capture of viral particles at mucosal surfaces by these cells and subsequent transmission to permissive cells. HIV subverts the migration properties of dendritic cells to gain access to CD4+ T-cells in lymph nodes. Virus transmission to permissive T-cells occurs either in trans (without DCs infection, through viral capture and transmission), or in cis (following DCs productive infection, through the usual CD4-gp120 interaction), thereby inducing a robust infection. In trans infection, bound virions remain infectious over days and it is proposed that they are not degraded, but protected in non-lysosomal acidic organelles within the DCs close to the cell membrane thus contributing to the viral infectious potential during DCs' migration from the periphery to the lymphoid tissues. On arrival at lymphoid tissues, intact virions recycle back to DCs' cell surface allowing virus transmission to CD4+ T-cells. Its function is as follows. Acts as a class I viral fusion protein. Under the current model, the protein has at least 3 conformational states: pre-fusion native state, pre-hairpin intermediate state, and post-fusion hairpin state. During fusion of viral and target intracellular membranes, the coiled coil regions (heptad repeats) assume a trimer-of-hairpins structure, positioning the fusion peptide in close proximity to the C-terminal region of the ectodomain. The formation of this structure appears to drive apposition and subsequent fusion of viral and target cell membranes. Complete fusion occurs in host cell endosomes and is dynamin-dependent, however some lipid transfer might occur at the plasma membrane. The virus undergoes clathrin-dependent internalization long before endosomal fusion, thus minimizing the surface exposure of conserved viral epitopes during fusion and reducing the efficacy of inhibitors targeting these epitopes. Membranes fusion leads to delivery of the nucleocapsid into the cytoplasm. The polypeptide is Envelope glycoprotein gp160 (Human immunodeficiency virus type 1 group M subtype B (isolate SF162) (HIV-1)).